A 459-amino-acid chain; its full sequence is Vanillin aminotransferase (459 aa).

Pyridoxal 5'-phosphate-binding positions include 115-116 (GS) and aspartate 255. The residue at position 284 (lysine 284) is an N6-(pyridoxal phosphate)lysine. 320 to 321 (FT) is a pyridoxal 5'-phosphate binding site. A coiled-coil region spans residues 428-459 (LSLEELDELIRIYGKALKDTEKRVEELKSQKK).

It belongs to the class-III pyridoxal-phosphate-dependent aminotransferase family. In terms of tissue distribution, expressed in placental tissue of immature fruit.

It catalyses the reaction vanillin + L-alanine = vanillylamine + pyruvate. Involved in the biosynthesis of capsaicinoids natural products, pungent alkaloids synthesized from phenylpropanoid intermediates in the placental tissue of chili pepper fruit acting as repellant on herbivorous mammals and conferring spiciness to hot peppers. Can transfer an amine from alanine to vanillin, forming vanillylamine and pyruvate. The polypeptide is Vanillin aminotransferase (Capsicum frutescens (Cayenne pepper)).